The following is a 157-amino-acid chain: MIRIGQGYDVHKLAYDRELIVGGIKIPYEKGLLGHSDADVLLHAITDAIIGAIGAGDIGHFFPDTDMAFKDADSAELLEEIWQKVEADGFRLGNLDATIIAEKPKMAPYVEQMKLRIAELLHADSAQVNVKATTTEKLGFTGRKEGIASLAVVLLEK.

2 residues coordinate a divalent metal cation: Asp-9 and His-11. 4-CDP-2-C-methyl-D-erythritol 2-phosphate contacts are provided by residues 9 to 11 and 35 to 36; these read DVH and HS. A divalent metal cation is bound at residue His-43. 4-CDP-2-C-methyl-D-erythritol 2-phosphate-binding positions include 57–59, 62–66, 101–107, 133–136, Phe-140, and Arg-143; these read DIG, FPDTD, AEKPKMA, and TTTE.

It belongs to the IspF family. Homotrimer. It depends on a divalent metal cation as a cofactor.

It catalyses the reaction 4-CDP-2-C-methyl-D-erythritol 2-phosphate = 2-C-methyl-D-erythritol 2,4-cyclic diphosphate + CMP. Its pathway is isoprenoid biosynthesis; isopentenyl diphosphate biosynthesis via DXP pathway; isopentenyl diphosphate from 1-deoxy-D-xylulose 5-phosphate: step 4/6. In terms of biological role, involved in the biosynthesis of isopentenyl diphosphate (IPP) and dimethylallyl diphosphate (DMAPP), two major building blocks of isoprenoid compounds. Catalyzes the conversion of 4-diphosphocytidyl-2-C-methyl-D-erythritol 2-phosphate (CDP-ME2P) to 2-C-methyl-D-erythritol 2,4-cyclodiphosphate (ME-CPP) with a corresponding release of cytidine 5-monophosphate (CMP). This chain is 2-C-methyl-D-erythritol 2,4-cyclodiphosphate synthase, found in Listeria monocytogenes serotype 4b (strain CLIP80459).